The chain runs to 200 residues: TATA-box-binding protein 2 (200 aa).

Repeat copies occupy residues 25–101 and 115–192.

It belongs to the TBP family. In terms of assembly, belongs to the TFIID complex together with the TBP-associated factors (TAFs). Binds DNA as monomer.

The protein resides in the nucleus. In terms of biological role, general transcription factor that functions at the core of the DNA-binding multiprotein factor TFIID. Binding of TFIID to the TATA box is the initial transcriptional step of the pre-initiation complex (PIC), playing a role in the activation of eukaryotic genes transcribed by RNA polymerase II. This Zea mays (Maize) protein is TATA-box-binding protein 2 (TBP2).